A 292-amino-acid chain; its full sequence is Secreted frizzled-related protein 2 (292 aa).

The first 20 residues, 1–20, serve as a signal peptide directing secretion; the sequence is MPRRLCALLLLASQCLGSTA. In terms of domain architecture, FZ spans 32–152; it reads YKRSNCKPIP…PKDNDLCIPL (121 aa). 7 cysteine pairs are disulfide-bonded: Cys-37-Cys-100, Cys-47-Cys-93, Cys-84-Cys-122, Cys-111-Cys-149, Cys-115-Cys-139, Cys-169-Cys-242, and Cys-187-Cys-292. The region spanning 169-292 is the NTR domain; the sequence is CDACKNKNED…FSRSIRKLQC (124 aa).

It belongs to the secreted frizzled-related protein (sFRP) family.

It is found in the secreted. Soluble frizzled-related proteins (sFRPS) function as modulators of Wnt signaling through direct interaction with Wnts. They have a role in regulating cell growth and differentiation in specific cell types. SFRP2 appears to be associated with myogenesis. The polypeptide is Secreted frizzled-related protein 2 (SFRP2) (Gallus gallus (Chicken)).